A 929-amino-acid chain; its full sequence is Protein transport protein Sec16B (929 aa).

Residues 1–10 (MEPWDPPQLP) show a composition bias toward pro residues. The interval 1–64 (MEPWDPPQLP…RPASQAESYE (64 aa)) is disordered. The central conserved domain (CCD); required for localization to endoplasmic reticulum exit sites stretch occupies residues 228–669 (APHKFLQPHV…LRTYCQHCQV (442 aa)). 2 disordered regions span residues 675 to 727 (PEVA…QDVS) and 781 to 929 (LSTR…PNPL). Basic and acidic residues predominate over residues 694-710 (EMVHEQPHSDGPHDEQW). The span at 781–795 (LSTRARSASESSTAS) shows a compositional bias: low complexity. Polar residues predominate over residues 838–848 (PKATTSGSPTP). Residues 856–871 (PSPPGAVPSAQPPASP) show a composition bias toward pro residues.

The protein belongs to the SEC16 family. As to quaternary structure, SEC16A and SEC16B are each present in multiple copies in a heteromeric complex.

The protein resides in the endoplasmic reticulum membrane. It localises to the golgi apparatus membrane. In terms of biological role, plays a role in the organization of the endoplasmic reticulum exit sites (ERES), also known as transitional endoplasmic reticulum (tER). Required for secretory cargo traffic from the endoplasmic reticulum to the Golgi apparatus. Involved in peroxisome biogenesis. Regulates the transport of peroxisomal biogenesis factors PEX3 and PEX16 from the ER to peroxisomes. This Gallus gallus (Chicken) protein is Protein transport protein Sec16B (SEC16B).